The primary structure comprises 363 residues: Aminomethyltransferase (363 aa).

It belongs to the GcvT family. In terms of assembly, the glycine cleavage system is composed of four proteins: P, T, L and H.

The catalysed reaction is N(6)-[(R)-S(8)-aminomethyldihydrolipoyl]-L-lysyl-[protein] + (6S)-5,6,7,8-tetrahydrofolate = N(6)-[(R)-dihydrolipoyl]-L-lysyl-[protein] + (6R)-5,10-methylene-5,6,7,8-tetrahydrofolate + NH4(+). Functionally, the glycine cleavage system catalyzes the degradation of glycine. The sequence is that of Aminomethyltransferase from Staphylococcus aureus (strain MRSA252).